The primary structure comprises 564 residues: Capsid vertex component 2 (564 aa).

An interaction with major capsid protein/MCP region spans residues 1–45; it reads MQAARKRWPPSVAFWSPSPKHYVRVDRDSLRETRRLASSLRRNAL. Positions 91 to 133 are disordered; sequence AGDGRGSGNPPTSPGQGHPLSWGNSDSHGGGGGPGGGGGGELL. Over residues 118–131 the composition is skewed to gly residues; the sequence is HGGGGGPGGGGGGE.

The protein belongs to the herpesviridae CVC2 protein family. Heterodimerizes with CVC1. Interacts with major capsid protein/MCP and triplex capsid protein 1/TRX1 at the pentamer vertices. Interacts with the large tegument protein/LTP.

It localises to the virion. The protein localises to the host nucleus. Functionally, capsid vertex-specific component that plays a role during viral DNA encapsidation, assuring correct genome cleavage and presumably stabilizing capsids that contain full-length viral genomes. Participates in the interaction between the capsid and the tegument through interaction with the large tegument protein/LTP. The chain is Capsid vertex component 2 from Equus caballus (Horse).